The chain runs to 446 residues: RUN domain-containing protein 3A (446 aa).

Residues 1–298 (MEASFVQTTM…LQLQLEEAAA (298 aa)) form an interaction with RAP2A region. Positions 52-189 (DDSSEEFVNF…IDFSFCLKGE (138 aa)) constitute an RUN domain. Position 215 is a phosphothreonine (T215). The interval 216–239 (DEEERHSAESSTSEDNSPEHPYLP) is disordered. At S232 the chain carries Phosphoserine. The stretch at 267–322 (YLEELVRLRESQLKDLEAENRRLQLQLEEAAAQNQREKRELEGVILELQEQLTGLI) forms a coiled coil. Residues 372–384 (PLSAEASLSSDSQ) are compositionally biased toward polar residues. The segment at 372–403 (PLSAEASLSSDSQRLGEAKRDEEPWGPIGKDP) is disordered. A compositionally biased stretch (basic and acidic residues) spans 385–394 (RLGEAKRDEE). Phosphoserine occurs at positions 416 and 419.

The protein belongs to the RUNDC3 family. As to quaternary structure, interacts with the GTP-bound form of RAP2A. In terms of tissue distribution, brain.

May act as an effector of RAP2A in neuronal cells. This Mus musculus (Mouse) protein is RUN domain-containing protein 3A (Rundc3a).